The following is a 309-amino-acid chain: MRVIFAGTPPFAAAALEALVAAGHEIVLVLTQPDRPAGRGMKLAASAVKQAALAHGLPVYQPTTLKTPEAQARLADCAADVMVVAAYGLILPQAVLDLPRLGCLNIHASLLPRWRGAAPIQRAILAGDCETGITIMQMAAGLDTGAMLAKTVVPIADADTAATLHDALAVAGAAAIVSALSAYDTLVPQTQDEREASYAAKLSKEEARLDWQQPAEALARAVRAFNPVPGAWTLLAGAPFKILRAEAAPQGEADAPPGTVLRADPAGIVVACGGGALVLHEIQAAGSKRMTAAAFLAGRALSAGTRLGA.

A (6S)-5,6,7,8-tetrahydrofolate-binding site is contributed by 109–112 (SLLP).

Belongs to the Fmt family.

It carries out the reaction L-methionyl-tRNA(fMet) + (6R)-10-formyltetrahydrofolate = N-formyl-L-methionyl-tRNA(fMet) + (6S)-5,6,7,8-tetrahydrofolate + H(+). Functionally, attaches a formyl group to the free amino group of methionyl-tRNA(fMet). The formyl group appears to play a dual role in the initiator identity of N-formylmethionyl-tRNA by promoting its recognition by IF2 and preventing the misappropriation of this tRNA by the elongation apparatus. The polypeptide is Methionyl-tRNA formyltransferase (Thiobacillus denitrificans (strain ATCC 25259 / T1)).